A 256-amino-acid chain; its full sequence is Ribonuclease 3 (256 aa).

Residues 3–125 (LDALQQRLGY…IVGAVFLDAG (123 aa)) form the RNase III domain. Glu-38 is a binding site for Mg(2+). Residue Asp-42 is part of the active site. Mg(2+) is bound by residues Asp-111 and Glu-114. The active site involves Glu-114. The 71-residue stretch at 152–222 (DAKTLLQEYL…AKLALDEVQK (71 aa)) folds into the DRBM domain. A disordered region spans residues 229–256 (KRSRAERTGKTRKQPQPQDPQLSLRLKE).

The protein belongs to the ribonuclease III family. As to quaternary structure, homodimer. It depends on Mg(2+) as a cofactor.

Its subcellular location is the cytoplasm. The enzyme catalyses Endonucleolytic cleavage to 5'-phosphomonoester.. Functionally, digests double-stranded RNA. Involved in the processing of primary rRNA transcript to yield the immediate precursors to the large and small rRNAs (23S and 16S). Processes some mRNAs, and tRNAs when they are encoded in the rRNA operon. Processes pre-crRNA and tracrRNA of type II CRISPR loci if present in the organism. The sequence is that of Ribonuclease 3 from Cupriavidus taiwanensis (strain DSM 17343 / BCRC 17206 / CCUG 44338 / CIP 107171 / LMG 19424 / R1) (Ralstonia taiwanensis (strain LMG 19424)).